Here is a 1035-residue protein sequence, read N- to C-terminus: Ephrin type-A receptor 6 (1035 aa).

Residues 1–22 (MGGCEVREFLLQFGFFLPLLTA) form the signal peptide. At 23 to 549 (WTGDCSHVSN…MAAEQGQILV (527 aa)) the chain is on the extracellular side. One can recognise an Eph LBD domain in the interval 33 to 211 (QVVLLDTSTV…FYKKCPFTVR (179 aa)). Fibronectin type-III domains are found at residues 330–440 (PPSA…TDQD) and 441–536 (APSL…TGDE). N342, N396, and N409 each carry an N-linked (GlcNAc...) asparagine glycan. A helical transmembrane segment spans residues 550–570 (IATAAVGGFTLLVILTLFFLI). The Cytoplasmic portion of the chain corresponds to 571 to 1035 (TGRCQWYIKA…MHIQEKGFHV (465 aa)). 2 positions are modified to phosphotyrosine; by autocatalysis: Y605 and Y611. The Protein kinase domain occupies 630–943 (IRIERVIGAG…RNPSALHTLV (314 aa)). ATP-binding positions include 636 to 644 (IGAGEFGEV) and K662. The active-site Proton acceptor is the D797. 2 positions are modified to phosphotyrosine; by autocatalysis: Y830 and Y977. Positions 960 to 1024 (PLFVTVGDWL…VSSIQTLRLH (65 aa)) constitute an SAM domain. Positions 1033-1035 (FHV) match the PDZ-binding motif.

This sequence belongs to the protein kinase superfamily. Tyr protein kinase family. Ephrin receptor subfamily. In terms of assembly, heterotetramer upon binding of the ligand. The heterotetramer is composed of an ephrin dimer and a receptor dimer. Oligomerization is probably required to induce biological responses. Interacts (via SAM domain) with ANKS1A (via SAM domain). As to expression, brain.

It localises to the membrane. The catalysed reaction is L-tyrosyl-[protein] + ATP = O-phospho-L-tyrosyl-[protein] + ADP + H(+). In terms of biological role, receptor tyrosine kinase which binds promiscuously GPI-anchored ephrin-A family ligands residing on adjacent cells, leading to contact-dependent bidirectional signaling into neighboring cells. The signaling pathway downstream of the receptor is referred to as forward signaling while the signaling pathway downstream of the ephrin ligand is referred to as reverse signaling. The chain is Ephrin type-A receptor 6 (Epha6) from Rattus norvegicus (Rat).